Consider the following 433-residue polypeptide: Staphylopine synthase (433 aa).

NADP(+) contacts are provided by residues 9–12, Arg-33, 37–40, and Asp-99; these read TGPV and SEKS. The Proton donor/acceptor role is filled by His-216.

The protein belongs to the staphylopine dehydrogenase family. In terms of assembly, homodimer.

It catalyses the reaction staphylopine + NADP(+) + H2O = (2S)-2-amino-4-{[(1R)-1-carboxy-2-(1H-imidazol-4-yl)ethyl]amino}butanoate + pyruvate + NADPH + H(+). Catalyzes the NADPH-dependent reductive condensation of pyruvate to the intermediate formed by the adjacently encoded enzyme CntL, namely (2S)-2-amino-4-{[(1R)-1-carboxy-2-(1H-imidazol-4-yl)ethyl]amino}butanoate, leading to the production of staphylopine. This is the last step in the biosynthesis of the metallophore staphylopine, which is involved in the acquisition of nickel, cobalt, zinc, copper, and iron, and thus enables bacterial growth inside the host, where metal access is limited. Therefore, this enzyme probably contributes to staphylococcal virulence. Can use neither NADH nor alpha-ketoglutarate in place of NADPH and pyruvate, respectively. In Staphylococcus aureus (strain Mu50 / ATCC 700699), this protein is Staphylopine synthase.